The sequence spans 460 residues: Bifunctional protein GlmU (460 aa).

The tract at residues 1-235 (MTLTAAIVLA…PLSVEGVNDR (235 aa)) is pyrophosphorylase. Residues 9 to 12 (LAAG), Lys-23, Gln-76, and 81 to 82 (GT) contribute to the UDP-N-acetyl-alpha-D-glucosamine site. A Mg(2+)-binding site is contributed by Asp-109. UDP-N-acetyl-alpha-D-glucosamine-binding residues include Gly-146, Glu-161, Asn-176, and Asn-233. Asn-233 provides a ligand contact to Mg(2+). Residues 236–256 (VQLASLAKAHNLRVCRQWMLD) are linker. An N-acetyltransferase region spans residues 257-460 (GVTIVDPQTT…VDNWKPAWER (204 aa)). Arg-338 and Lys-356 together coordinate UDP-N-acetyl-alpha-D-glucosamine. The Proton acceptor role is filled by His-368. UDP-N-acetyl-alpha-D-glucosamine is bound by residues Tyr-371 and Asn-382. Acetyl-CoA contacts are provided by residues 391 to 392 (NY) and Ala-428.

The protein in the N-terminal section; belongs to the N-acetylglucosamine-1-phosphate uridyltransferase family. This sequence in the C-terminal section; belongs to the transferase hexapeptide repeat family. Homotrimer. It depends on Mg(2+) as a cofactor.

The protein localises to the cytoplasm. The enzyme catalyses alpha-D-glucosamine 1-phosphate + acetyl-CoA = N-acetyl-alpha-D-glucosamine 1-phosphate + CoA + H(+). It carries out the reaction N-acetyl-alpha-D-glucosamine 1-phosphate + UTP + H(+) = UDP-N-acetyl-alpha-D-glucosamine + diphosphate. It participates in nucleotide-sugar biosynthesis; UDP-N-acetyl-alpha-D-glucosamine biosynthesis; N-acetyl-alpha-D-glucosamine 1-phosphate from alpha-D-glucosamine 6-phosphate (route II): step 2/2. The protein operates within nucleotide-sugar biosynthesis; UDP-N-acetyl-alpha-D-glucosamine biosynthesis; UDP-N-acetyl-alpha-D-glucosamine from N-acetyl-alpha-D-glucosamine 1-phosphate: step 1/1. It functions in the pathway bacterial outer membrane biogenesis; LPS lipid A biosynthesis. In terms of biological role, catalyzes the last two sequential reactions in the de novo biosynthetic pathway for UDP-N-acetylglucosamine (UDP-GlcNAc). The C-terminal domain catalyzes the transfer of acetyl group from acetyl coenzyme A to glucosamine-1-phosphate (GlcN-1-P) to produce N-acetylglucosamine-1-phosphate (GlcNAc-1-P), which is converted into UDP-GlcNAc by the transfer of uridine 5-monophosphate (from uridine 5-triphosphate), a reaction catalyzed by the N-terminal domain. The chain is Bifunctional protein GlmU from Bifidobacterium animalis subsp. lactis (strain AD011).